Reading from the N-terminus, the 215-residue chain is Cytochrome b6 (215 aa).

Residues 32-52 (IFYCLGGITLTCFLVQVATGF) form a helical membrane-spanning segment. Residue cysteine 35 coordinates heme c. Residues histidine 86 and histidine 100 each contribute to the heme b site. Helical transmembrane passes span 90–110 (ASMM…TGGF), 116–136 (LTWV…VTGY), and 186–206 (LHTF…FPMI). The heme b site is built by histidine 187 and histidine 202.

Belongs to the cytochrome b family. PetB subfamily. In terms of assembly, the 4 large subunits of the cytochrome b6-f complex are cytochrome b6, subunit IV (17 kDa polypeptide, PetD), cytochrome f and the Rieske protein, while the 4 small subunits are PetG, PetL, PetM and PetN. The complex functions as a dimer. It depends on heme b as a cofactor. Heme c serves as cofactor.

The protein resides in the plastid. It localises to the chloroplast thylakoid membrane. Component of the cytochrome b6-f complex, which mediates electron transfer between photosystem II (PSII) and photosystem I (PSI), cyclic electron flow around PSI, and state transitions. This Saccharum hybrid (Sugarcane) protein is Cytochrome b6.